Consider the following 263-residue polypeptide: Glutamate 5-kinase (263 aa).

K15 serves as a coordination point for ATP. The substrate site is built by S55, D142, and N154. ATP is bound by residues 174–175 and 216–222; these read SD and TGGIETK.

This sequence belongs to the glutamate 5-kinase family.

Its subcellular location is the cytoplasm. The catalysed reaction is L-glutamate + ATP = L-glutamyl 5-phosphate + ADP. It participates in amino-acid biosynthesis; L-proline biosynthesis; L-glutamate 5-semialdehyde from L-glutamate: step 1/2. Catalyzes the transfer of a phosphate group to glutamate to form L-glutamate 5-phosphate. In Alkaliphilus oremlandii (strain OhILAs) (Clostridium oremlandii (strain OhILAs)), this protein is Glutamate 5-kinase.